The following is a 333-amino-acid chain: Holliday junction branch migration complex subunit RuvB (333 aa).

Residues 1–182 (MDERLLSGES…FGVLSRLEYY (182 aa)) are large ATPase domain (RuvB-L). ATP is bound by residues Leu-21, Arg-22, Gly-63, Lys-66, Thr-67, Thr-68, 129-131 (EDF), Arg-172, Tyr-182, and Arg-219. Thr-67 contributes to the Mg(2+) binding site. A small ATPAse domain (RuvB-S) region spans residues 183–253 (TVDQLSAIVE…ITQMALELLQ (71 aa)). The segment at 256–333 (KLGLDHIDHK…EHFGMEIPKV (78 aa)) is head domain (RuvB-H). Residues Arg-311 and Arg-316 each contribute to the DNA site.

Belongs to the RuvB family. As to quaternary structure, homohexamer. Forms an RuvA(8)-RuvB(12)-Holliday junction (HJ) complex. HJ DNA is sandwiched between 2 RuvA tetramers; dsDNA enters through RuvA and exits via RuvB. An RuvB hexamer assembles on each DNA strand where it exits the tetramer. Each RuvB hexamer is contacted by two RuvA subunits (via domain III) on 2 adjacent RuvB subunits; this complex drives branch migration. In the full resolvosome a probable DNA-RuvA(4)-RuvB(12)-RuvC(2) complex forms which resolves the HJ.

The protein resides in the cytoplasm. It carries out the reaction ATP + H2O = ADP + phosphate + H(+). The RuvA-RuvB-RuvC complex processes Holliday junction (HJ) DNA during genetic recombination and DNA repair, while the RuvA-RuvB complex plays an important role in the rescue of blocked DNA replication forks via replication fork reversal (RFR). RuvA specifically binds to HJ cruciform DNA, conferring on it an open structure. The RuvB hexamer acts as an ATP-dependent pump, pulling dsDNA into and through the RuvAB complex. RuvB forms 2 homohexamers on either side of HJ DNA bound by 1 or 2 RuvA tetramers; 4 subunits per hexamer contact DNA at a time. Coordinated motions by a converter formed by DNA-disengaged RuvB subunits stimulates ATP hydrolysis and nucleotide exchange. Immobilization of the converter enables RuvB to convert the ATP-contained energy into a lever motion, pulling 2 nucleotides of DNA out of the RuvA tetramer per ATP hydrolyzed, thus driving DNA branch migration. The RuvB motors rotate together with the DNA substrate, which together with the progressing nucleotide cycle form the mechanistic basis for DNA recombination by continuous HJ branch migration. Branch migration allows RuvC to scan DNA until it finds its consensus sequence, where it cleaves and resolves cruciform DNA. The chain is Holliday junction branch migration complex subunit RuvB from Bacillus cereus (strain G9842).